The sequence spans 367 residues: Leu/Ile/Val-binding protein (367 aa).

Positions 1-23 (MNMKGKALLAGCIALSLSNMAFA) are cleaved as a signal peptide. Cys-76 and Cys-101 are joined by a disulfide.

It belongs to the leucine-binding protein family.

It localises to the periplasm. Functionally, this protein is a component of the leucine, isoleucine, valine, (threonine) transport system, which is one of the two periplasmic binding protein-dependent transport systems of the high-affinity transport of the branched-chain amino acids. The protein is Leu/Ile/Val-binding protein (livJ) of Citrobacter freundii.